A 578-amino-acid chain; its full sequence is Membrane protein insertase YidC (578 aa).

Residues isoleucine 3–tryptophan 23 traverse the membrane as a helical segment. The interval alanine 34–aspartate 72 is disordered. Over residues alanine 37–alanine 66 the composition is skewed to polar residues. Helical transmembrane passes span leucine 361 to leucine 381, leucine 387 to phenylalanine 407, leucine 457 to leucine 477, proline 500 to proline 520, and proline 535 to valine 555.

The protein belongs to the OXA1/ALB3/YidC family. Type 1 subfamily. As to quaternary structure, interacts with the Sec translocase complex via SecD. Specifically interacts with transmembrane segments of nascent integral membrane proteins during membrane integration.

It is found in the cell inner membrane. In terms of biological role, required for the insertion and/or proper folding and/or complex formation of integral membrane proteins into the membrane. Involved in integration of membrane proteins that insert both dependently and independently of the Sec translocase complex, as well as at least some lipoproteins. Aids folding of multispanning membrane proteins. This Pseudomonas aeruginosa (strain ATCC 15692 / DSM 22644 / CIP 104116 / JCM 14847 / LMG 12228 / 1C / PRS 101 / PAO1) protein is Membrane protein insertase YidC.